A 100-amino-acid polypeptide reads, in one-letter code: Urease subunit gamma (100 aa).

Belongs to the urease gamma subunit family. As to quaternary structure, heterotrimer of UreA (gamma), UreB (beta) and UreC (alpha) subunits. Three heterotrimers associate to form the active enzyme.

It localises to the cytoplasm. It carries out the reaction urea + 2 H2O + H(+) = hydrogencarbonate + 2 NH4(+). It functions in the pathway nitrogen metabolism; urea degradation; CO(2) and NH(3) from urea (urease route): step 1/1. This chain is Urease subunit gamma, found in Prochlorococcus marinus (strain MIT 9303).